A 195-amino-acid polypeptide reads, in one-letter code: Imidazoleglycerol-phosphate dehydratase (195 aa).

It belongs to the imidazoleglycerol-phosphate dehydratase family.

Its subcellular location is the cytoplasm. The enzyme catalyses D-erythro-1-(imidazol-4-yl)glycerol 3-phosphate = 3-(imidazol-4-yl)-2-oxopropyl phosphate + H2O. It participates in amino-acid biosynthesis; L-histidine biosynthesis; L-histidine from 5-phospho-alpha-D-ribose 1-diphosphate: step 6/9. This is Imidazoleglycerol-phosphate dehydratase from Paraburkholderia xenovorans (strain LB400).